The primary structure comprises 528 residues: MFSLQDLCRKNTFFLPNDFSKHTLQRLGLYWKEHGSVHRIEKDSIMIQNELVLSINDALQLAGEEGDTDVVQLLLLWEGNLHYAIIGALKTENYNLVCEYHSQIQDWHILLPLIQDPETFEKCHDLSLGCDLICLLQHAVKCDMLSILVKYKEDLLNVRIRHRTQSLFVLACENRRFEIIEWIGQNLSIPEPEAIFSIAIVTKDVELFSLGYKIIFDYMQRQGIFQLTNVVRMLLLNRHIGMAIEKGLLPFILETLKYGGSVKRALSYAVIDNKRKIIDYLVRHENIPRGTIERLLHLAVKKQSSRKTLNLLLSYINYKVKNVKKLLEHVVKYNSTLVIRILLEKKKNLLDATLTRYVKDSTYFQVKEFMQDFSISPEKFIKIAVREKRNVLIKGISEDIWENPAERIRNLKQIVCTIKYESGRQFLINIIHTIYQSYSLKPEEILKLATFYVKHNATTHFKDLCKYLWLNRGTESKKLFLECLEIADEKEFPDIKSIVSEYINYLFTAGAITKEEIMQVYALEYAMY.

ANK repeat units lie at residues 54-83 (SIND…NLHY), 129-158 (GCDL…LLNV), 261-290 (SVKR…IPRG), 292-321 (IERL…YKVK), and 322-352 (NVKK…LLDA).

The protein belongs to the asfivirus MGF 505 family. In terms of assembly, interacts with host STING1. Interacts with host JAK1; this interaction leads to JAK1 degradation. Interacts with host JAK2; this interaction leads to JAK2 degradation. Interacts with host RELA; this interaction inhibits NF-kappa-B promoter activity.

The protein localises to the host cytoplasm. Its function is as follows. Plays a role in virus cell tropism, and may be required for efficient virus replication in macrophages. Interferes with host NF-kappa-B promoter activity mediated by TLR8. Mechanistically, inhibits the phosphorylation and subsequent nuclear translocation of host NF-kappa-B RELA subunit downstream of TLR8. Promotes the expression of the autophagy-related protein host ULK1 to degrade host STING and inhibit the interferon response. Inhibits also JAK1- and JAK2-mediated signaling and thus negatively regulates the IFN-gamma signaling. This African swine fever virus (strain Badajoz 1971 Vero-adapted) (Ba71V) protein is Protein MGF 505-7R.